The following is a 348-amino-acid chain: 3-isopropylmalate dehydrogenase (348 aa).

Residue 76 to 87 participates in NAD(+) binding; the sequence is GPKWTDPNNRPE. Substrate-binding residues include Arg-94, Arg-104, Arg-132, and Asp-217. Mg(2+)-binding residues include Asp-217, Asp-241, and Asp-245. Residue 275–287 coordinates NAD(+); that stretch reads GSAPDIAGKNVAN.

Belongs to the isocitrate and isopropylmalate dehydrogenases family. LeuB type 1 subfamily. As to quaternary structure, homodimer. Mg(2+) is required as a cofactor. Mn(2+) serves as cofactor.

The protein localises to the cytoplasm. It catalyses the reaction (2R,3S)-3-isopropylmalate + NAD(+) = 4-methyl-2-oxopentanoate + CO2 + NADH. The protein operates within amino-acid biosynthesis; L-leucine biosynthesis; L-leucine from 3-methyl-2-oxobutanoate: step 3/4. In terms of biological role, catalyzes the oxidation of 3-carboxy-2-hydroxy-4-methylpentanoate (3-isopropylmalate) to 3-carboxy-4-methyl-2-oxopentanoate. The product decarboxylates to 4-methyl-2 oxopentanoate. In Staphylococcus aureus (strain MW2), this protein is 3-isopropylmalate dehydrogenase.